The chain runs to 400 residues: MIIKPRIRGFICTTTHPVGCEANVLEQINITKAKGKIANGPKKVLVVGSSSGYGLSSRITAAFGSDAATLGVFFEKPSSETKPGTAGWYNSAAFDKFAKAEGLYSKSINCDAFSHEAKQKAIELIKEDLGQVDMVVYSLASPVRKLPDSGELIRSSLKPIGEPYKATAVDTNKDIIIEASVEPATEQEINDTVTVMGGEDWELWMQALAEAGVLADGCKTVAYSYIGTELTWPIYWHGALGKAKMDLDRAAHALDDKLSATGGSANVAVLKSVVTQASSAIPVMPLYIAMVFKKMRAEGLHEGCIEQINRMFSERLYKADGSAAEVDESNRLRLDDWELREEIQQHCRDMWPQVTSENLAELTDYREYKEEFLKLFGFGIEGIDYEQDVNPNVEFDVVSI.

NAD(+) is bound by residues 48-53 (GSSSGY), 74-75 (FE), 111-112 (DA), and 139-140 (LA). Residue tyrosine 225 coordinates substrate. Tyrosine 235 serves as the catalytic Proton donor. NAD(+) is bound by residues lysine 244 and 273 to 275 (VVT).

The protein belongs to the TER reductase family. Monomer.

It carries out the reaction a 2,3-saturated acyl-[ACP] + NAD(+) = a (2E)-enoyl-[ACP] + NADH + H(+). It functions in the pathway lipid metabolism; fatty acid biosynthesis. Its function is as follows. Involved in the final reduction of the elongation cycle of fatty acid synthesis (FAS II). Catalyzes the reduction of a carbon-carbon double bond in an enoyl moiety that is covalently linked to an acyl carrier protein (ACP). This is Enoyl-[acyl-carrier-protein] reductase [NADH] from Shewanella piezotolerans (strain WP3 / JCM 13877).